Consider the following 279-residue polypeptide: Four and a half LIM domains protein 2 (279 aa).

The C4-type zinc-finger motif lies at 7–31 (CHHCNESLYGKKYILKEENPHCVAC). 3 consecutive LIM zinc-binding domains span residues 40-92 (CEEC…CTDC), 101-153 (CQEC…CVPC), and 162-212 (CVQC…CLTC). A Glycyl lysine isopeptide (Lys-Gly) (interchain with G-Cter in SUMO2) cross-link involves residue K78. Glycyl lysine isopeptide (Lys-Gly) (interchain with G-Cter in SUMO2) cross-links involve residues K167 and K220. The LIM zinc-binding 4 domain maps to 221–275 (CAGCTNPISGLGGTKYISFEERQWHNDCFNCKKCSLSLVGRGFLTERDDILCPDC). S238 is subject to Phosphoserine.

Interacts with ZNF638 and TTN/titin. Interacts with E4F1. Interacts with GRB7. Interacts with SIRT1 and FOXO1. Interacts with CEFIP. Interacts with calcineurin. Interacts with FOXK1. In terms of tissue distribution, highly expressed in heart but also detectable in brain and skeletal muscle.

The protein localises to the cytoplasm. It localises to the nucleus. It is found in the myofibril. The protein resides in the sarcomere. Its subcellular location is the z line. May function as a molecular transmitter linking various signaling pathways to transcriptional regulation. Negatively regulates the transcriptional repressor E4F1 and may function in cell growth. Inhibits the transcriptional activity of FOXO1 and its apoptotic function by enhancing the interaction of FOXO1 with SIRT1 and FOXO1 deacetylation. Negatively regulates the calcineurin/NFAT signaling pathway in cardiomyocytes. This Mus musculus (Mouse) protein is Four and a half LIM domains protein 2 (Fhl2).